The primary structure comprises 84 residues: FMRFamide-like neuropeptides 26 (84 aa).

A signal peptide spans 1–19 (MKVMFMLALLFSSLVATSA). A propeptide spanning residues 20–48 (FRLPFQFFGANEDFNSGLTKRNYYESKPY) is cleaved from the precursor. 2 positions are modified to phenylalanine amide: Phe61 and Phe82.

It belongs to the FARP (FMRFamide related peptide) family. Each flp gene is expressed in a distinct set of neurons.

The protein localises to the secreted. Its function is as follows. FMRFamides and FMRFamide-like peptides are neuropeptides. This is FMRFamide-like neuropeptides 26 from Caenorhabditis elegans.